Reading from the N-terminus, the 279-residue chain is Large ribosomal subunit protein uL2 (279 aa).

Residues 223-279 (MAMNPVDHPMGGGEGKSKSGGGRKHPKSPWGQLAKGLKTRNKKKASTKLIVRGRKAK) form a disordered region. Gly residues predominate over residues 232 to 242 (MGGGEGKSKSG). Residues 259–279 (LKTRNKKKASTKLIVRGRKAK) are compositionally biased toward basic residues.

The protein belongs to the universal ribosomal protein uL2 family. Part of the 50S ribosomal subunit. Forms a bridge to the 30S subunit in the 70S ribosome.

Functionally, one of the primary rRNA binding proteins. Required for association of the 30S and 50S subunits to form the 70S ribosome, for tRNA binding and peptide bond formation. It has been suggested to have peptidyltransferase activity; this is somewhat controversial. Makes several contacts with the 16S rRNA in the 70S ribosome. This is Large ribosomal subunit protein uL2 from Chlorobaculum tepidum (strain ATCC 49652 / DSM 12025 / NBRC 103806 / TLS) (Chlorobium tepidum).